Here is a 158-residue protein sequence, read N- to C-terminus: Cyclic pyranopterin monophosphate synthase (158 aa).

Substrate-binding positions include 73-75 (LCH) and 110-111 (ME). Asp-125 is a catalytic residue.

It belongs to the MoaC family. Homohexamer; trimer of dimers.

The catalysed reaction is (8S)-3',8-cyclo-7,8-dihydroguanosine 5'-triphosphate = cyclic pyranopterin phosphate + diphosphate. The protein operates within cofactor biosynthesis; molybdopterin biosynthesis. Catalyzes the conversion of (8S)-3',8-cyclo-7,8-dihydroguanosine 5'-triphosphate to cyclic pyranopterin monophosphate (cPMP). The protein is Cyclic pyranopterin monophosphate synthase of Azotobacter vinelandii (strain DJ / ATCC BAA-1303).